Here is a 426-residue protein sequence, read N- to C-terminus: Glutamate-1-semialdehyde 2,1-aminomutase (426 aa).

Position 265 is an N6-(pyridoxal phosphate)lysine (lysine 265).

It belongs to the class-III pyridoxal-phosphate-dependent aminotransferase family. HemL subfamily. Homodimer. Pyridoxal 5'-phosphate serves as cofactor.

The protein resides in the cytoplasm. It catalyses the reaction (S)-4-amino-5-oxopentanoate = 5-aminolevulinate. The protein operates within porphyrin-containing compound metabolism; protoporphyrin-IX biosynthesis; 5-aminolevulinate from L-glutamyl-tRNA(Glu): step 2/2. The polypeptide is Glutamate-1-semialdehyde 2,1-aminomutase (Actinobacillus pleuropneumoniae serotype 7 (strain AP76)).